A 366-amino-acid polypeptide reads, in one-letter code: tRNA/tmRNA (uracil-C(5))-methyltransferase (366 aa).

Positions 190, 218, 223, 239, and 299 each coordinate S-adenosyl-L-methionine. Catalysis depends on cysteine 324, which acts as the Nucleophile. Glutamate 358 serves as the catalytic Proton acceptor.

This sequence belongs to the class I-like SAM-binding methyltransferase superfamily. RNA M5U methyltransferase family. TrmA subfamily.

It catalyses the reaction uridine(54) in tRNA + S-adenosyl-L-methionine = 5-methyluridine(54) in tRNA + S-adenosyl-L-homocysteine + H(+). The enzyme catalyses uridine(341) in tmRNA + S-adenosyl-L-methionine = 5-methyluridine(341) in tmRNA + S-adenosyl-L-homocysteine + H(+). Functionally, dual-specificity methyltransferase that catalyzes the formation of 5-methyluridine at position 54 (m5U54) in all tRNAs, and that of position 341 (m5U341) in tmRNA (transfer-mRNA). This chain is tRNA/tmRNA (uracil-C(5))-methyltransferase, found in Salmonella paratyphi B (strain ATCC BAA-1250 / SPB7).